The primary structure comprises 344 residues: NAD-dependent alcohol dehydrogenase (344 aa).

Zn(2+) contacts are provided by Cys38, His66, Asp96, Cys99, Cys102, Cys110, and Cys152.

This sequence belongs to the zinc-containing alcohol dehydrogenase family. Homodimer and homotetramer. Zn(2+) is required as a cofactor.

It carries out the reaction a primary alcohol + NAD(+) = an aldehyde + NADH + H(+). It catalyses the reaction a secondary alcohol + NAD(+) = a ketone + NADH + H(+). In Sulfolobus acidocaldarius (strain ATCC 33909 / DSM 639 / JCM 8929 / NBRC 15157 / NCIMB 11770), this protein is NAD-dependent alcohol dehydrogenase (adh).